We begin with the raw amino-acid sequence, 343 residues long: Cytoplasmic tRNA 2-thiolation protein 1 (343 aa).

Belongs to the TtcA family. CTU1/NCS6/ATPBD3 subfamily.

The protein localises to the cytoplasm. It participates in tRNA modification; 5-methoxycarbonylmethyl-2-thiouridine-tRNA biosynthesis. In terms of biological role, plays a central role in 2-thiolation of mcm(5)S(2)U at tRNA wobble positions of tRNA(Lys), tRNA(Glu) and tRNA(Gln). Directly binds tRNAs and probably acts by catalyzing adenylation of tRNAs, an intermediate required for 2-thiolation. It is unclear whether it acts as a sulfurtransferase that transfers sulfur from thiocarboxylated URM1 onto the uridine of tRNAs at wobble position. In Drosophila virilis (Fruit fly), this protein is Cytoplasmic tRNA 2-thiolation protein 1.